The sequence spans 326 residues: MNHRQRGIALLMVLLILALMMVLASAMTERSARMYQQTATTLDNLQAKWYALGAETLAAALLQRDALDSPNQTHLAQNWAQQGRRFTVNDGEIYATITDAQACFNLNAINQRGDDESAAVPYPAQIFTRLLENLGSEPLRALQLTAALRDWVDDDRQPLLNGAEDEVYMAQSPGYLTGNQPLQDVSELRLLAGMDAALYQRLLPYVCALADETLQVNVNTLQPDRAALLAALFPAELTLVEARQLLQARAATGWSSVAAFLSQPALQKTDTAAARPWLAVHSERFIATFSVVMGNARYQQRSLLQKQGRTFGVVQRRYGIYWVADE.

A propeptide spans 1-7 (MNHRQRG) (leader sequence). The helical transmembrane segment at 8 to 28 (IALLMVLLILALMMVLASAMT) threads the bilayer. The Periplasmic portion of the chain corresponds to 29–326 (ERSARMYQQT…RYGIYWVADE (298 aa)).

It belongs to the GSP K family. As to quaternary structure, type II secretion is composed of four main components: the outer membrane complex, the inner membrane complex, the cytoplasmic secretion ATPase and the periplasm-spanning pseudopilus. Interacts with core component PulG. Cleaved by prepilin peptidase.

The protein resides in the cell inner membrane. Functionally, component of the type II secretion system required for the energy-dependent secretion of extracellular factors such as proteases and toxins from the periplasm. Plays a role in pseudopilus assembly and seems to control its length. Interacts with the pseudopilus tip complex that is critical for the recognition and binding of secretion substrates. This chain is Type II secretion system protein K (pulK), found in Klebsiella pneumoniae.